Reading from the N-terminus, the 436-residue chain is MTHKQSINVIGAGLAGSEAAWQIAKRGGHVRLYEMRPVKQTPAHHTDKFAELVCSNSLRGNSLANAVGVLKEEMRHLDSVIIKAADEAAVPAGGALAVDRHDFAGKVTEYVKGHPNVTVVQEEVTEIPEGPAIIATGPLTSEALAEQLKAFSGEEYLYFYDAAAPIIDAETIDRDKVYLKSRYDKGEAAYLNCPMTEEEFDRFYQALIEAETVPLREFEKDIFFEGCMPIEVMASRGKKTMLFGPLKPVGLEDPKTGKRPFAVVQLRQDNSSGTLYNMVGFQTHLKWGPQKEVIRMIPGLENADIVRYGVMHRNTFLNSPNLLKPTYQSKKRSDLFFAGQMTGVEGYVESAAAGLVAGINAFKWTQSQELAVFPEETMIGSMAAYITNANAKTFQPMNANFGLVPPLNVRIKAKKERYEALAKRALESIQNFMKEV.

Residue 11 to 16 (GAGLAG) coordinates FAD.

The protein belongs to the MnmG family. TrmFO subfamily. Requires FAD as cofactor.

It localises to the cytoplasm. It catalyses the reaction uridine(54) in tRNA + (6R)-5,10-methylene-5,6,7,8-tetrahydrofolate + NADH + H(+) = 5-methyluridine(54) in tRNA + (6S)-5,6,7,8-tetrahydrofolate + NAD(+). The catalysed reaction is uridine(54) in tRNA + (6R)-5,10-methylene-5,6,7,8-tetrahydrofolate + NADPH + H(+) = 5-methyluridine(54) in tRNA + (6S)-5,6,7,8-tetrahydrofolate + NADP(+). Functionally, catalyzes the folate-dependent formation of 5-methyl-uridine at position 54 (M-5-U54) in all tRNAs. This chain is Methylenetetrahydrofolate--tRNA-(uracil-5-)-methyltransferase TrmFO, found in Shouchella clausii (strain KSM-K16) (Alkalihalobacillus clausii).